Here is a 220-residue protein sequence, read N- to C-terminus: GTP cyclohydrolase 1 (220 aa).

Residues cysteine 109, histidine 112, and cysteine 180 each contribute to the Zn(2+) site.

This sequence belongs to the GTP cyclohydrolase I family. In terms of assembly, homomer.

The catalysed reaction is GTP + H2O = 7,8-dihydroneopterin 3'-triphosphate + formate + H(+). It participates in cofactor biosynthesis; 7,8-dihydroneopterin triphosphate biosynthesis; 7,8-dihydroneopterin triphosphate from GTP: step 1/1. This Pectobacterium carotovorum subsp. carotovorum (strain PC1) protein is GTP cyclohydrolase 1.